We begin with the raw amino-acid sequence, 497 residues long: Guanosine-5'-triphosphate,3'-diphosphate pyrophosphatase (497 aa).

The protein belongs to the GppA/Ppx family. GppA subfamily.

It catalyses the reaction guanosine 3'-diphosphate 5'-triphosphate + H2O = guanosine 3',5'-bis(diphosphate) + phosphate + H(+). The protein operates within purine metabolism; ppGpp biosynthesis; ppGpp from GTP: step 2/2. Catalyzes the conversion of pppGpp to ppGpp. Guanosine pentaphosphate (pppGpp) is a cytoplasmic signaling molecule which together with ppGpp controls the 'stringent response', an adaptive process that allows bacteria to respond to amino acid starvation, resulting in the coordinated regulation of numerous cellular activities. The chain is Guanosine-5'-triphosphate,3'-diphosphate pyrophosphatase from Vibrio vulnificus (strain YJ016).